A 142-amino-acid polypeptide reads, in one-letter code: Large ribosomal subunit protein uL22c (142 aa).

The protein belongs to the universal ribosomal protein uL22 family. In terms of assembly, part of the 50S ribosomal subunit.

Its subcellular location is the plastid. It is found in the chloroplast. This protein binds specifically to 23S rRNA. Its function is as follows. The globular domain of the protein is located near the polypeptide exit tunnel on the outside of the subunit, while an extended beta-hairpin is found that lines the wall of the exit tunnel in the center of the 70S ribosome. The polypeptide is Large ribosomal subunit protein uL22c (rpl22) (Carica papaya (Papaya)).